The sequence spans 434 residues: Methylenetetrahydrofolate--tRNA-(uracil-5-)-methyltransferase TrmFO (434 aa).

Residue 9 to 14 participates in FAD binding; the sequence is GAGLAG.

The protein belongs to the MnmG family. TrmFO subfamily. FAD serves as cofactor.

Its subcellular location is the cytoplasm. The enzyme catalyses uridine(54) in tRNA + (6R)-5,10-methylene-5,6,7,8-tetrahydrofolate + NADH + H(+) = 5-methyluridine(54) in tRNA + (6S)-5,6,7,8-tetrahydrofolate + NAD(+). The catalysed reaction is uridine(54) in tRNA + (6R)-5,10-methylene-5,6,7,8-tetrahydrofolate + NADPH + H(+) = 5-methyluridine(54) in tRNA + (6S)-5,6,7,8-tetrahydrofolate + NADP(+). Its function is as follows. Catalyzes the folate-dependent formation of 5-methyl-uridine at position 54 (M-5-U54) in all tRNAs. The polypeptide is Methylenetetrahydrofolate--tRNA-(uracil-5-)-methyltransferase TrmFO (Bacillus pumilus (strain SAFR-032)).